Here is a 303-residue protein sequence, read N- to C-terminus: Trans-enoyl reductase tazE (303 aa).

The tract at residues 1–26 (MTAEHDAAILPKPGGPLAVGKRATPE) is disordered. 44-49 (CDYYQR) lines the NADP(+) pocket. Substrate is bound at residue 136 to 143 (LAVLTALT). Residues 170-173 (SSSV), 193-196 (SPKH), Y211, and 246-247 (LD) contribute to the NADP(+) site. Residue 265–269 (VLPEC) coordinates substrate.

It belongs to the zinc-containing alcohol dehydrogenase family.

Its pathway is secondary metabolite biosynthesis. Its function is as follows. Trans-enoyl reductase; part of the gene cluster that mediates the biosynthesis of azaterrilone A and other azaphilones, a class of fungal metabolites characterized by a highly oxygenated pyrano-quinone bicyclic core and exhibiting a broad range of bioactivities. The first step of the pathway begins with the non-reducing polyketide synthase tazA that assembles one acetyl-CoA starter unit, five malonyl-CoA units, and catalyzes a series of Claisen condensations, methylation, PT-mediated cyclization, and finally releases the first hexaketide precursor through the R-domain. The tazA product then undergoes reduction on its terminal ketone and the following pyran-ring formation by yet undetermined enzyme(s). Dehydration and enoyl reduction, possibly involving the trans-enoyl reductase tazE leads to the next intermediate. TazD is predicted as an acetyltransferase and might catalyze the acetylation steps leading to the synthesis of azaterrilone A. Azaterrilone A is not the final product of the taz pathway and both the highly reducing polyketide synthase tazB and the dual enzyme tazHJ catalyze late steps of the pathway, leading to the production of the 2 final stereoisomers that contain additional polyketide modification whose structures have still to be determined. The sequence is that of Trans-enoyl reductase tazE from Aspergillus terreus (strain NIH 2624 / FGSC A1156).